Reading from the N-terminus, the 431-residue chain is Divergent protein kinase domain 1B (431 aa).

Topologically, residues 1–30 are cytoplasmic; the sequence is MRRLRRLVHLVLLCPFSKGLQGRLPGLRVK. Positions 5-6 match the May mediate ER retention motif; sequence RR. Residues 31–51 traverse the membrane as a helical segment; that stretch reads YVLLVWLGIFVGSWMVYVHYS. Topologically, residues 52 to 431 are lumenal; it reads SYSELCRGHV…WREISNTNYS (380 aa). Intrachain disulfides connect cysteine 57–cysteine 94 and cysteine 62–cysteine 117.

This sequence belongs to the DIPK family. In terms of processing, among the many cysteines in the lumenal domain, most are probably involved in disulfide bonds. As to expression, expressed in kidney, testis, lung, heart, stomach, intestine, pancreas, liver and salivary gland. Strongly expressed in acute pancreatitis, brain, and in peripheral endothelial cells.

The protein resides in the endoplasmic reticulum membrane. In Mus musculus (Mouse), this protein is Divergent protein kinase domain 1B (Dipk1b).